The sequence spans 229 residues: Transmembrane emp24 domain-containing protein 5 (229 aa).

The N-terminal stretch at 1-27 is a signal peptide; it reads MGDKIWLPFPVLLLAALPPVLLPGAAG. The Lumenal portion of the chain corresponds to 28–196; sequence FTPSLDSDFT…IQESNFDRVN (169 aa). The region spanning 45–126 is the GOLD domain; sequence RECFYQPMPL…EKVIFFELIL (82 aa). The helical transmembrane segment at 197–217 threads the bilayer; sequence FWSMVNLVVMVVVSAIQVYML. Residues 218–229 lie on the Cytoplasmic side of the membrane; sequence KSLFEDKRKSRT.

The protein belongs to the EMP24/GP25L family. Interacts with TMED9 and TMED10.

Its subcellular location is the endoplasmic reticulum membrane. The protein resides in the golgi apparatus. It localises to the cis-Golgi network membrane. The protein localises to the endoplasmic reticulum-Golgi intermediate compartment membrane. Its function is as follows. Potential role in vesicular protein trafficking, mainly in the early secretory pathway. Required for the maintenance of the Golgi apparatus; involved in protein exchange between Golgi stacks during assembly. Probably not required for COPI-vesicle-mediated retrograde transport. This chain is Transmembrane emp24 domain-containing protein 5 (TMED5), found in Pongo abelii (Sumatran orangutan).